A 193-amino-acid polypeptide reads, in one-letter code: Bifunctional protein PyrR (193 aa).

Substrate is bound by residues 57–58, Arg98, 119–127, Arg152, and Val176; these read TR and DDVLYSGRS. The short motif at 115-127 is the PRPP-binding element; the sequence is VILVDDVLYSGRS.

Belongs to the purine/pyrimidine phosphoribosyltransferase family. PyrR subfamily.

It carries out the reaction UMP + diphosphate = 5-phospho-alpha-D-ribose 1-diphosphate + uracil. Regulates the transcription of the pyrimidine nucleotide (pyr) operon in response to exogenous pyrimidines. Its function is as follows. Also displays a weak uracil phosphoribosyltransferase activity which is not physiologically significant. The protein is Bifunctional protein PyrR of Mycobacterium bovis (strain ATCC BAA-935 / AF2122/97).